Here is a 316-residue protein sequence, read N- to C-terminus: Pantothenate kinase (316 aa).

An ATP-binding site is contributed by 95 to 102 (GSVAVGKS).

Belongs to the prokaryotic pantothenate kinase family.

Its subcellular location is the cytoplasm. It carries out the reaction (R)-pantothenate + ATP = (R)-4'-phosphopantothenate + ADP + H(+). The protein operates within cofactor biosynthesis; coenzyme A biosynthesis; CoA from (R)-pantothenate: step 1/5. The chain is Pantothenate kinase from Erwinia tasmaniensis (strain DSM 17950 / CFBP 7177 / CIP 109463 / NCPPB 4357 / Et1/99).